The primary structure comprises 128 residues: Probable 4-amino-4-deoxy-L-arabinose-phosphoundecaprenol flippase subunit ArnF (128 aa).

At 1-2 (MG) the chain is on the cytoplasmic side. The chain crosses the membrane as a helical span at residues 3–23 (LMWGLFSVIIASAAQLSLGFA). Topologically, residues 24–32 (ASHLPPMTH) are periplasmic. The helical transmembrane segment at 33–53 (LWDFIAALLAFGLDARILLLG) threads the bilayer. The Cytoplasmic segment spans residues 54-76 (LQGYLLSVFCWYKTLHKLALSKA). Residues 77-97 (YALLSMSYVLVWIASMVLPGW) traverse the membrane as a helical segment. Topologically, residues 98-100 (EGT) are periplasmic. Residues 101 to 121 (FSLKALLGVACIMSGLMLIFL) traverse the membrane as a helical segment. Topologically, residues 122 to 128 (PTTKQRY) are cytoplasmic.

Belongs to the ArnF family. In terms of assembly, heterodimer of ArnE and ArnF.

It localises to the cell inner membrane. It functions in the pathway bacterial outer membrane biogenesis; lipopolysaccharide biosynthesis. In terms of biological role, translocates 4-amino-4-deoxy-L-arabinose-phosphoundecaprenol (alpha-L-Ara4N-phosphoundecaprenol) from the cytoplasmic to the periplasmic side of the inner membrane. This chain is Probable 4-amino-4-deoxy-L-arabinose-phosphoundecaprenol flippase subunit ArnF, found in Escherichia coli O7:K1 (strain IAI39 / ExPEC).